The primary structure comprises 363 residues: Pyrimidine monooxygenase RutA (363 aa).

FMN-binding positions include 49 to 50, Asn115, Glu124, 140 to 141, and Ser190; these read IK and RY.

This sequence belongs to the NtaA/SnaA/DszA monooxygenase family. RutA subfamily.

It carries out the reaction uracil + FMNH2 + NADH + O2 = (Z)-3-ureidoacrylate + FMN + NAD(+) + H2O + H(+). The enzyme catalyses thymine + FMNH2 + NADH + O2 = (Z)-2-methylureidoacrylate + FMN + NAD(+) + H2O + H(+). Catalyzes the pyrimidine ring opening between N-3 and C-4 by an unusual flavin hydroperoxide-catalyzed mechanism, adding oxygen atoms in the process to yield ureidoacrylate peracid, that immediately reacts with FMN forming ureidoacrylate and FMN-N(5)-oxide. The FMN-N(5)-oxide reacts spontaneously with NADH to produce FMN. Requires the flavin reductase RutF to regenerate FMN in vivo. The sequence is that of Pyrimidine monooxygenase RutA from Pantoea ananatis (strain LMG 20103).